Here is a 160-residue protein sequence, read N- to C-terminus: Small ribosomal subunit protein uS7 (160 aa).

This sequence belongs to the universal ribosomal protein uS7 family. As to quaternary structure, part of the 30S ribosomal subunit. Contacts proteins S9 and S11.

In terms of biological role, one of the primary rRNA binding proteins, it binds directly to 16S rRNA where it nucleates assembly of the head domain of the 30S subunit. Is located at the subunit interface close to the decoding center, probably blocks exit of the E-site tRNA. The polypeptide is Small ribosomal subunit protein uS7 (Ehrlichia chaffeensis (strain ATCC CRL-10679 / Arkansas)).